A 227-amino-acid polypeptide reads, in one-letter code: Large ribosomal subunit protein uL3 (227 aa).

The disordered stretch occupies residues 146-167; it reads RGPMAHGSKFHRHQGSNGACSS.

Belongs to the universal ribosomal protein uL3 family. In terms of assembly, part of the 50S ribosomal subunit. Forms a cluster with proteins L14 and L19.

Functionally, one of the primary rRNA binding proteins, it binds directly near the 3'-end of the 23S rRNA, where it nucleates assembly of the 50S subunit. In Agathobacter rectalis (strain ATCC 33656 / DSM 3377 / JCM 17463 / KCTC 5835 / VPI 0990) (Eubacterium rectale), this protein is Large ribosomal subunit protein uL3.